Consider the following 205-residue polypeptide: Sarcosine oxidase subunit gamma (205 aa).

Belongs to the SoxG family. In terms of assembly, heterotetramer composed of subunits alpha (SoxA), beta (SoxB), gamma (SoxG) and delta (SoxD).

The protein localises to the cytoplasm. It catalyses the reaction sarcosine + (6S)-5,6,7,8-tetrahydrofolate + O2 = (6R)-5,10-methylene-5,6,7,8-tetrahydrofolate + glycine + H2O2. It carries out the reaction sarcosine + O2 + H2O = formaldehyde + glycine + H2O2. With respect to regulation, inhibited by Zn(2+), Cu(2+), Cd(2+), Hg(2+), Ag(+), p-chloromercuribenzoate (p-CMB), iodoacetamide, N-ethylmaleimide, CN(-), o-phenanthroline and sodium lauryl sulfate. Its function is as follows. In the presence of tetrahydrofolate, catalyzes the oxidative demethylation of sarcosine to yield glycine, 5,10-methylenetetrahydrofolate and hydrogen peroxide. In the absence of tetrahydrofolate, catalyzes the oxidative demethylation of sarcosine to yield glycine, formaldehyde and hydrogen peroxide. Can also use N-methyl-L-alanine and N-ethyl-L-glycine. Is very specific for oxygen as an acceptor. The protein is Sarcosine oxidase subunit gamma of Corynebacterium sp. (strain U-96).